A 924-amino-acid chain; its full sequence is MEIKEEGASEEGQHFLPTAQANDPGDCQFTSIQKTPNEPQLEFILACKDLVAPVRDRKLNTLVQISVIHPVEQSLTRYSSTEIVEGTRDPLFLTGVTFPSEYPIYEETKIKLTVYDVKDKSHDTVRTSVLPEHKDPPPEVGRSFLGYASFKVGELLKSKEQLLVLSLRTSDGGKVVGTIEVSVVKMGEIEDGEADHITTDVQGQKCALVCECTAPESVSGKDNLPFLNSVLKNPVCKLYRFPTSDNKWMRIREQMSESILSFHIPKELISLHIKEDLCRNQEIKELGELSPHWDNLRKNVLTHCDQMVNMYQDILTELSKETGSSFKSSSSKGEKTLEFVPINLHLQRMQVHSPHLKDALYDVITVGAPAAHFQGFKNGGLRKLLHRFETERRNTGYQFIYYSPENTAKAKEVLSNINQLQPLIATHADLLLNSASQHSPDSLKNSLKMLSEKTELFVHAFKDQLVRSALLALYTARPGGILKKPPSPKSSTEESSPQDQPPVMRGQDSIPHHSDYDEEEWDRVWANVGKSLNCIIAMVDKLIERDGGSEGSGGNNDGEKEPSLTDAIPSHPREDWYEQLYPLILTLKDCMGEVVNRAKQSLTFVLLQELAYSLPQCLMLTLRRDIVFSQALAGLVCGFIIKLQTSLYDPGFLQQLHTVGLIVQYEGLLSTYSDEIGMLEDMAVGISDLKKVAFKIIEAKSNDVLPVITGRREHYVVEVKLPARMFESLPLQIKEGQLLHVYPVLFNVGINEQQTLAERFGDVSLQESINQENFELLQEYYKIFMEKMPPDYISHFQEQNDLKALLENLLQNIQSKKRKNVEIMWLAATICRKLNGIRFTCCKSAKDRTSMSVTLEQCSILRDEHQLHKDFFIRALDCMRREGCRIENVLKNIKCRKYAFNMLQLMAFPKYYRPPEGTYGKADT.

Residues 1-13 show a composition bias toward basic and acidic residues; it reads MEIKEEGASEEGQ. Disordered regions lie at residues 1–24, 481–516, and 546–570; these read MEIK…ANDP, ILKK…HSDY, and DGGS…AIPS. A C2 domain is found at 23-165; the sequence is DPGDCQFTSI…LKSKEQLLVL (143 aa).

Belongs to the inositol 3,4-bisphosphate 4-phosphatase family. In terms of tissue distribution, widely expressed with highest levels occurring in the skeletal muscle and heart.

It catalyses the reaction a 1,2-diacyl-sn-glycero-3-phospho-(1D-myo-inositol-3,4-bisphosphate) + H2O = a 1,2-diacyl-sn-glycero-3-phospho-(1D-myo-inositol-3-phosphate) + phosphate. The enzyme catalyses 1D-myo-inositol 1,3,4-trisphosphate + H2O = 1D-myo-inositol 1,3-bisphosphate + phosphate. It carries out the reaction 1D-myo-inositol 3,4-bisphosphate + H2O = 1D-myo-inositol 3-phosphate + phosphate. The protein operates within signal transduction; phosphatidylinositol signaling pathway. With respect to regulation, strongly inhibited by inositol hexakisphosphate. Its function is as follows. Catalyzes the hydrolysis of the 4-position phosphate of phosphatidylinositol 3,4-bisphosphate, inositol 1,3,4-trisphosphate and inositol 3,4-trisphosphate. Plays a role in the late stages of macropinocytosis by dephosphorylating phosphatidylinositol 3,4-bisphosphate in membrane ruffles. The lipid phosphatase activity is critical for tumor suppressor function. Antagonizes the PI3K-AKT/PKB signaling pathway by dephosphorylating phosphoinositides and thereby modulating cell cycle progression and cell survival. The polypeptide is Inositol polyphosphate 4-phosphatase type II (INPP4B) (Homo sapiens (Human)).